The chain runs to 356 residues: S-adenosylmethionine:tRNA ribosyltransferase-isomerase (356 aa).

It belongs to the QueA family. Monomer.

Its subcellular location is the cytoplasm. The enzyme catalyses 7-aminomethyl-7-carbaguanosine(34) in tRNA + S-adenosyl-L-methionine = epoxyqueuosine(34) in tRNA + adenine + L-methionine + 2 H(+). It functions in the pathway tRNA modification; tRNA-queuosine biosynthesis. Functionally, transfers and isomerizes the ribose moiety from AdoMet to the 7-aminomethyl group of 7-deazaguanine (preQ1-tRNA) to give epoxyqueuosine (oQ-tRNA). The polypeptide is S-adenosylmethionine:tRNA ribosyltransferase-isomerase (Shigella dysenteriae serotype 1 (strain Sd197)).